The following is a 454-amino-acid chain: Aspartokinase 3 (454 aa).

ACT domains lie at 312–388 (ISKY…ALIM) and 389–454 (VVGE…VLIS).

Belongs to the aspartokinase family. Monomer.

The enzyme catalyses L-aspartate + ATP = 4-phospho-L-aspartate + ADP. It participates in amino-acid biosynthesis; L-lysine biosynthesis via DAP pathway; (S)-tetrahydrodipicolinate from L-aspartate: step 1/4. The protein operates within amino-acid biosynthesis; L-methionine biosynthesis via de novo pathway; L-homoserine from L-aspartate: step 1/3. It functions in the pathway amino-acid biosynthesis; L-threonine biosynthesis; L-threonine from L-aspartate: step 1/5. Its function is as follows. Catalyzes the phosphorylation of the beta-carboxyl group of aspartic acid with ATP to yield 4-phospho-L-aspartate, which is involved in the branched biosynthetic pathway leading to the biosynthesis of amino acids threonine, isoleucine and methionine. This is Aspartokinase 3 (yclM) from Bacillus subtilis (strain 168).